Here is a 560-residue protein sequence, read N- to C-terminus: Leiomodin-3 (560 aa).

The interval 1-49 is interaction with tropomyosin alpha; it reads MSEHSRNSDQEELLDEEINEDEILANLSAEELKELQSEMEVMAPDPSLP. The stretch at 16-42 forms a coiled coil; the sequence is EEINEDEILANLSAEELKELQSEMEVM. Disordered stretches follow at residues 45–68 and 127–217; these read DPSL…NFNH and IVAN…SKLD. Residues 142-167 show a composition bias toward acidic residues; that stretch reads ETDEEDEEEEDDDDDDEGEDDGEESE. Residues 168–182 show a composition bias toward basic and acidic residues; the sequence is ETNREEEGKAKEQIR. Residues 183–192 show a composition bias toward polar residues; sequence NCENNCQQVT. Over residues 194–217 the composition is skewed to basic and acidic residues; that stretch reads KAFKEQRDRPEAQEQSEKKISKLD. A coiled-coil region spans residues 386 to 425; it reads VTNLLTRNQDKQRQKRQEEQKQQQLKEQKKLIAMLENGLG. 2 disordered regions span residues 437–480 and 494–530; these read PKPD…KYRT and QRKS…PPLV. Residues 448–458 are compositionally biased toward pro residues; it reads QPPPPRPPNPQ. A compositionally biased stretch (basic and acidic residues) spans 498–516; sequence RMPEAREPPEKTNLKDVIK. A WH2 domain is found at 534–553; sequence PRDQLLNDIRHSSVAYLKPV.

It belongs to the tropomodulin family. May interact with tropomyosin alpha (TPM1/2) N-terminus. Interacts with KLHL40; leading to stabilization. Post-translationally, ubiquitinated, leading to its degradation. Interaction with KLHL40 negatively regulates ubiquitination and degradation. As to expression, expressed in cardiac and at higher levels in skeletal muscles (at protein level).

The protein localises to the cytoplasm. Its subcellular location is the myofibril. It is found in the sarcomere. The protein resides in the m line. It localises to the a band. The protein localises to the cytoskeleton. Functionally, essential for the organization of sarcomeric actin thin filaments in skeletal muscle. Increases the rate of actin polymerization. This is Leiomodin-3 (LMOD3) from Homo sapiens (Human).